Here is a 152-residue protein sequence, read N- to C-terminus: MKKLQNVFAAIKTGLLAKATSVTVIGSKRVFEILSRFENEGLIRGFQIIDISKNKVSIYLKYKQDMTSLLSKIKVVSVNKEKLYIKGKLLKKLNTGVNMYFVESKFGLQTLPQLKIRNKRLYAPLGGEIKYIVEINKVNPKIQELIKKKHEI.

Belongs to the universal ribosomal protein uS8 family.

It localises to the mitochondrion. The chain is Small ribosomal subunit protein uS8m (mrps8) from Dictyostelium discoideum (Social amoeba).